The sequence spans 136 residues: Blasticidin-S acetyltransferase (136 aa).

The region spanning 1 to 136 is the N-acetyltransferase domain; the sequence is MLSLPRLQTV…ITSHLLVKEL (136 aa).

Functionally, confers resistance to blasticidin S antibiotic. The polypeptide is Blasticidin-S acetyltransferase (bls) (Streptomyces morookaense (Streptoverticillium morookaense)).